We begin with the raw amino-acid sequence, 243 residues long: Adenylate dimethylallyltransferase (243 aa).

It carries out the reaction dimethylallyl diphosphate + AMP = N(6)-(dimethylallyl)adenosine 5'-phosphate + diphosphate. Its function is as follows. Transfers dimethylallyl groups to AMP as part of the biosynthesis of cytokinin phytohormones. The chain is Adenylate dimethylallyltransferase (tzs) from Agrobacterium fabrum (strain C58 / ATCC 33970) (Agrobacterium tumefaciens (strain C58)).